A 555-amino-acid polypeptide reads, in one-letter code: Cilia- and flagella-associated protein 184 (555 aa).

The segment covering M1–G12 has biased composition (basic and acidic residues). The interval M1–Y202 is disordered. Acidic residues-rich tracts occupy residues G41–Q54 and P95–A105. Positions E106–P117 are enriched in low complexity. Positions E118 to Q131 are enriched in acidic residues. Residues E174–Y202 show a composition bias toward basic and acidic residues. Coiled coils occupy residues Y305–Q441 and D505–H531.

The protein belongs to the CFAP184 family. Forms a complex with CFAP263; the interaction is required for functional activity in cilia.

The protein localises to the cell projection. The protein resides in the cilium. It localises to the cytoplasm. It is found in the cytoskeleton. Its subcellular location is the microtubule organizing center. The protein localises to the centrosome. In terms of biological role, in complex with CFAP263, acts as a regulator of ciliary beating that connects radial spoke 3 (RS3) to the inner dynein arm (IDA) and the nexin-dynein regulatory complex (N-DRC). The complex is positioned parallel to N-DRC and forms a connection between the arch at the base of RS3, the IDA tail and N-DRC. This is Cilia- and flagella-associated protein 184 from Homo sapiens (Human).